The sequence spans 644 residues: uncharacterized protein (644 aa).

Residues 1 to 39 (MKANGLDNDPARTRMERTDIDSEHPEAQPLLNNNHRTLG) are disordered. Residues 1 to 90 (MKANGLDNDP…ILNILILINT (90 aa)) lie on the Cytoplasmic side of the membrane. Positions 9–26 (DPARTRMERTDIDSEHPE) are enriched in basic and acidic residues. Serine 22, serine 56, and serine 63 each carry phosphoserine. Residues 91–111 (IWLVTTLISDFFFNINILFGF) form a helical membrane-spanning segment. At 112–122 (SNRYASFNDLT) the chain is on the vacuolar side. The chain crosses the membrane as a helical span at residues 123 to 143 (LIFISIIANSFNLWFNKLGLY). At 144 to 147 (SALD) the chain is on the cytoplasmic side. A helical membrane pass occupies residues 148-168 (YSLNVTLCVLTLFNLALTYLI). The Vacuolar segment spans residues 169–174 (KYTRQR). The chain crosses the membrane as a helical span at residues 175 to 195 (IGFVGTFTYLWTSFSFFIGAI). Over 196-271 (LDWYLLFYNN…EWVSIGFRNT (76 aa)) the chain is Cytoplasmic. Residues 225–251 (NENHTNSTENRDRSQYGSGSPTPTHRS) form a disordered region. Residues 239-251 (QYGSGSPTPTHRS) show a composition bias toward polar residues. Phosphoserine is present on serine 244. The chain crosses the membrane as a helical span at residues 272-292 (IKFLILIFFALFTLNTLLTTL). Over 293–644 (DTYRLTHKLP…IGELGKLTED (352 aa)) the chain is Vacuolar. In terms of domain architecture, AB hydrolase-1 spans 348 to 619 (PIILFEHGGY…IVEGGHEIYK (272 aa)). A disordered region spans residues 469 to 492 (GRGDGDDGDDGNGNDGDGRNHDKT).

Its subcellular location is the vacuole membrane. This is an uncharacterized protein from Saccharomyces cerevisiae (strain YJM789) (Baker's yeast).